We begin with the raw amino-acid sequence, 567 residues long: Oxygen-dependent choline dehydrogenase (567 aa).

FAD is bound at residue D4–E33. The active-site Proton acceptor is the H473.

This sequence belongs to the GMC oxidoreductase family. It depends on FAD as a cofactor.

The catalysed reaction is choline + A = betaine aldehyde + AH2. The enzyme catalyses betaine aldehyde + NAD(+) + H2O = glycine betaine + NADH + 2 H(+). It functions in the pathway amine and polyamine biosynthesis; betaine biosynthesis via choline pathway; betaine aldehyde from choline (cytochrome c reductase route): step 1/1. Its function is as follows. Involved in the biosynthesis of the osmoprotectant glycine betaine. Catalyzes the oxidation of choline to betaine aldehyde and betaine aldehyde to glycine betaine at the same rate. The protein is Oxygen-dependent choline dehydrogenase of Yersinia pestis bv. Antiqua (strain Antiqua).